The following is a 286-amino-acid chain: MATPREIKKRINSVKNTRKITRTMEMVSTAKSKKISDRVNASHPFSNKIKELVSSLASLSGVVHSPYLRRPEKIKTVALLVITANRGLCGGYNSNVNRLAKAKVAEWKKAGVNVRLFIVGKKGISFFKFAGEKAEKTYTHLDDKSGYKEAEEFANLFLELFANEEVDAVEIASTVYYSSASQKPEVTRILPFEPAKEGNGNDLVVYEPSPERVLESLLPLVVKTAFLKAILEANCSEQIARRIAMKSATDAASEMIKLLTRGYNRVRQAKITQEISEIVAGADSLN.

This sequence belongs to the ATPase gamma chain family. In terms of assembly, F-type ATPases have 2 components, CF(1) - the catalytic core - and CF(0) - the membrane proton channel. CF(1) has five subunits: alpha(3), beta(3), gamma(1), delta(1), epsilon(1). CF(0) has three main subunits: a, b and c.

The protein resides in the cell inner membrane. In terms of biological role, produces ATP from ADP in the presence of a proton gradient across the membrane. The gamma chain is believed to be important in regulating ATPase activity and the flow of protons through the CF(0) complex. The chain is ATP synthase gamma chain from Leptospira borgpetersenii serovar Hardjo-bovis (strain JB197).